The following is a 600-amino-acid chain: Aspartate--tRNA(Asp/Asn) ligase (600 aa).

Glu-187 contributes to the L-aspartate binding site. An aspartate region spans residues 211 to 214; it reads QIFK. L-aspartate contacts are provided by Arg-233 and His-463. 233 to 235 contacts ATP; the sequence is RDE. Glu-497 contacts ATP. Arg-504 contacts L-aspartate. 549 to 552 contacts ATP; sequence GVDR.

The protein belongs to the class-II aminoacyl-tRNA synthetase family. Type 1 subfamily. As to quaternary structure, homodimer.

The protein localises to the cytoplasm. The enzyme catalyses tRNA(Asx) + L-aspartate + ATP = L-aspartyl-tRNA(Asx) + AMP + diphosphate. Its function is as follows. Aspartyl-tRNA synthetase with relaxed tRNA specificity since it is able to aspartylate not only its cognate tRNA(Asp) but also tRNA(Asn). Reaction proceeds in two steps: L-aspartate is first activated by ATP to form Asp-AMP and then transferred to the acceptor end of tRNA(Asp/Asn). The protein is Aspartate--tRNA(Asp/Asn) ligase of Wolbachia pipientis wMel.